The chain runs to 139 residues: MIQRTRNQSIMLSLPSNQSANHAILTFQPIGQSRYLLTFQPTPSIPLLQQYIISVPYLDAYSSICFPVMARIRSAKYCFFFFLVLFLNGIIATRGKAMLPTLPQKGAAFFPPKMPVPPSGPSKQHNSAPRSDFVQFFYM.

The helical transmembrane segment at 77–97 (YCFFFFLVLFLNGIIATRGKA) threads the bilayer.

The protein localises to the mitochondrion membrane. This is an uncharacterized protein from Arabidopsis thaliana (Mouse-ear cress).